Here is a 334-residue protein sequence, read N- to C-terminus: Phosphate acyltransferase (334 aa).

The protein belongs to the PlsX family. As to quaternary structure, homodimer. Probably interacts with PlsY.

Its subcellular location is the cytoplasm. The catalysed reaction is a fatty acyl-[ACP] + phosphate = an acyl phosphate + holo-[ACP]. The protein operates within lipid metabolism; phospholipid metabolism. Catalyzes the reversible formation of acyl-phosphate (acyl-PO(4)) from acyl-[acyl-carrier-protein] (acyl-ACP). This enzyme utilizes acyl-ACP as fatty acyl donor, but not acyl-CoA. This Caldicellulosiruptor bescii (strain ATCC BAA-1888 / DSM 6725 / KCTC 15123 / Z-1320) (Anaerocellum thermophilum) protein is Phosphate acyltransferase.